Here is a 543-residue protein sequence, read N- to C-terminus: EH domain-containing protein 2 (543 aa).

Residues Ser3 and Ser44 each carry the phosphoserine modification. One can recognise a Dynamin-type G domain in the interval 55–286; it reads FDGKPMVLVA…DLFRDIQGLP (232 aa). Residues 65–72 form a G1 motif region; the sequence is GQYSTGKT. 65-72 serves as a coordination point for ATP; that stretch reads GQYSTGKT. The G2 motif stretch occupies residues 91-92; the sequence is EP. Residues 153–156 are G3 motif; the sequence is DTPG. Residues 219–222 are G4 motif; that stretch reads NKAD. Lys220 serves as a coordination point for ATP. Position 243 (Val243) is a region of interest, G5 motif. Trp258 provides a ligand contact to ATP. Positions 320-340 are mediates membrane-binding; that stretch reads TVFGKENKKKQLILKLPVIFA. Phosphoserine is present on residues Ser438, Ser468, Ser470, Ser484, and Ser493. The region spanning 449–537 is the EH domain; sequence DKSKYDEIFY…RRLVPPSKRR (89 aa). The 36-residue stretch at 481-516 folds into the EF-hand domain; that stretch reads LPNSVLGRIWKLSDVDRDGMLDDEEFALASHLIEAK. Positions 494, 496, 498, 500, and 505 each coordinate Ca(2+). Residues 521 to 543 form a disordered region; the sequence is GLPTNLPRRLVPPSKRRQKGSAE. Positions 534–543 are enriched in basic residues; sequence SKRRQKGSAE.

Belongs to the TRAFAC class dynamin-like GTPase superfamily. Dynamin/Fzo/YdjA family. EHD subfamily. As to quaternary structure, homodimer and homooligomer. Interacts with EHD1. May also interact with EHD3 and EHD4. Interacts with MYOF. Interacts with EHBP1. Interacts with FER1L5 (via second C2 domain). Interacts with CAV1 in a cholesterol-dependent manner. Interacts (via EH domain) with PACSIN2 (via NPF motifs); this interaction probably stabilizes the caveolae. In terms of tissue distribution, detected in lung and adipocytes. Detected at lower levels in heart and skeletal muscle.

It localises to the cell membrane. Its subcellular location is the membrane. The protein resides in the caveola. It is found in the endosome membrane. The protein localises to the cytoplasm. It localises to the cytosol. The very low intrinsic ATPase activity is increased upon interaction with liposomes. Functionally, ATP- and membrane-binding protein that controls membrane reorganization/tubulation upon ATP hydrolysis. Plays a role in membrane trafficking between the plasma membrane and endosomes. Important for the internalization of GLUT4. Required for fusion of myoblasts to skeletal muscle myotubes. Required for normal translocation of FER1L5 to the plasma membrane. Regulates the equilibrium between cell surface-associated and cell surface-dissociated caveolae by constraining caveolae at the cell membrane. This Mus musculus (Mouse) protein is EH domain-containing protein 2.